Reading from the N-terminus, the 246-residue chain is DNA polymerase sliding clamp (246 aa).

It belongs to the PCNA family. As to quaternary structure, homotrimer. The subunits circularize to form a toroid; DNA passes through its center. Replication factor C (RFC) is required to load the toroid on the DNA.

Sliding clamp subunit that acts as a moving platform for DNA processing. Responsible for tethering the catalytic subunit of DNA polymerase and other proteins to DNA during high-speed replication. This is DNA polymerase sliding clamp from Thermoplasma acidophilum (strain ATCC 25905 / DSM 1728 / JCM 9062 / NBRC 15155 / AMRC-C165).